The following is a 292-amino-acid chain: uncharacterized protein (292 aa).

This is an uncharacterized protein from Haemophilus influenzae (strain ATCC 51907 / DSM 11121 / KW20 / Rd).